The chain runs to 249 residues: Tabinhibitin 4 (249 aa).

A signal peptide spans 1-23 (MTLNVYFVLLSPYSLQSVPLPLT). Positions 31 to 33 (RGD) match the Cell attachment site motif. The 144-residue stretch at 64–207 (LQKTNWLRGV…LKRALFTCNF (144 aa)) folds into the SCP domain. The Cell attachment site signature appears at 220-222 (RGD).

Belongs to the CRISP family. Expressed in salivary glands.

The protein localises to the secreted. Its function is as follows. Inhibits platelet aggregation induced by all agonists tested (ADP, arachidonic acid, the thromboxane A2 analog U46619, thrombin, and snake venom snaclecs (TMVA that activates platelet through GPIB, and stejnulxin that specifically acts through GPVI (GP6))). May act by competing with fibrinogen for binding to glycoprotein IIb/IIIa (ITGA2B/ITGB3). In Tabanus yao (Horsefly), this protein is Tabinhibitin 4.